We begin with the raw amino-acid sequence, 102 residues long: uncharacterized protein (102 aa).

Transmembrane regions (helical) follow at residues 28 to 48 (YLNLLLILEAILCPVDSLISI) and 81 to 101 (LSVLYLDLCCSGLIIAEAGIG).

It is found in the membrane. This is an uncharacterized protein from Saccharomyces cerevisiae (strain ATCC 204508 / S288c) (Baker's yeast).